We begin with the raw amino-acid sequence, 406 residues long: Putative colanic acid biosynthesis glycosyltransferase WcaL (406 aa).

The protein belongs to the glycosyltransferase group 1 family. Glycosyltransferase 4 subfamily.

Its pathway is slime biogenesis; slime polysaccharide biosynthesis. This chain is Putative colanic acid biosynthesis glycosyltransferase WcaL (wcaL), found in Salmonella typhimurium (strain LT2 / SGSC1412 / ATCC 700720).